The following is a 263-amino-acid chain: uncharacterized protein (263 aa).

A run of 7 helical transmembrane segments spans residues 53–73 (FWII…LVKI), 103–123 (GFLF…LPGL), 130–150 (IILP…VFSY), 153–173 (LIPA…EPLW), 181–201 (FILV…IQIL), 213–233 (MLAA…ILTP), and 241–261 (LLLS…LFLI).

The protein belongs to the TatC family.

Its subcellular location is the plastid. It localises to the chloroplast membrane. This is an uncharacterized protein from Trieres chinensis (Marine centric diatom).